The sequence spans 147 residues: Deoxyuridine 5'-triphosphate nucleotidohydrolase (147 aa).

Residues 67-69, Asn80, and 84-86 each bind substrate; these read RSG and TID.

It belongs to the dUTPase family. Mg(2+) is required as a cofactor.

The catalysed reaction is dUTP + H2O = dUMP + diphosphate + H(+). It functions in the pathway pyrimidine metabolism; dUMP biosynthesis; dUMP from dCTP (dUTP route): step 2/2. Its function is as follows. This enzyme is involved in nucleotide metabolism: it produces dUMP, the immediate precursor of thymidine nucleotides and it decreases the intracellular concentration of dUTP so that uracil cannot be incorporated into DNA. This is Deoxyuridine 5'-triphosphate nucleotidohydrolase from Anaplasma marginale (strain St. Maries).